Consider the following 264-residue polypeptide: S-adenosylmethionine decarboxylase proenzyme (264 aa).

Catalysis depends on Ser-113, which acts as the Schiff-base intermediate with substrate; via pyruvic acid. A Pyruvic acid (Ser); by autocatalysis modification is found at Ser-113. The active-site Proton acceptor; for processing activity is the His-118. Cys-141 functions as the Proton donor; for catalytic activity in the catalytic mechanism.

Belongs to the prokaryotic AdoMetDC family. Type 2 subfamily. As to quaternary structure, heterooctamer of four alpha and four beta chains arranged as a tetramer of alpha/beta heterodimers. It depends on pyruvate as a cofactor. In terms of processing, is synthesized initially as an inactive proenzyme. Formation of the active enzyme involves a self-maturation process in which the active site pyruvoyl group is generated from an internal serine residue via an autocatalytic post-translational modification. Two non-identical subunits are generated from the proenzyme in this reaction, and the pyruvate is formed at the N-terminus of the alpha chain, which is derived from the carboxyl end of the proenzyme. The post-translation cleavage follows an unusual pathway, termed non-hydrolytic serinolysis, in which the side chain hydroxyl group of the serine supplies its oxygen atom to form the C-terminus of the beta chain, while the remainder of the serine residue undergoes an oxidative deamination to produce ammonia and the pyruvoyl group blocking the N-terminus of the alpha chain.

It carries out the reaction S-adenosyl-L-methionine + H(+) = S-adenosyl 3-(methylsulfanyl)propylamine + CO2. The protein operates within amine and polyamine biosynthesis; S-adenosylmethioninamine biosynthesis; S-adenosylmethioninamine from S-adenosyl-L-methionine: step 1/1. In terms of biological role, catalyzes the decarboxylation of S-adenosylmethionine to S-adenosylmethioninamine (dcAdoMet), the propylamine donor required for the synthesis of the polyamines spermine and spermidine from the diamine putrescine. The protein is S-adenosylmethionine decarboxylase proenzyme of Xylella fastidiosa (strain 9a5c).